The sequence spans 427 residues: Gamma-glutamyl phosphate reductase (427 aa).

It belongs to the gamma-glutamyl phosphate reductase family.

Its subcellular location is the cytoplasm. The enzyme catalyses L-glutamate 5-semialdehyde + phosphate + NADP(+) = L-glutamyl 5-phosphate + NADPH + H(+). It functions in the pathway amino-acid biosynthesis; L-proline biosynthesis; L-glutamate 5-semialdehyde from L-glutamate: step 2/2. Its function is as follows. Catalyzes the NADPH-dependent reduction of L-glutamate 5-phosphate into L-glutamate 5-semialdehyde and phosphate. The product spontaneously undergoes cyclization to form 1-pyrroline-5-carboxylate. This Brucella anthropi (strain ATCC 49188 / DSM 6882 / CCUG 24695 / JCM 21032 / LMG 3331 / NBRC 15819 / NCTC 12168 / Alc 37) (Ochrobactrum anthropi) protein is Gamma-glutamyl phosphate reductase.